The primary structure comprises 207 residues: Guanylate kinase (207 aa).

Residues 17–197 (GRLVVLAGPS…SCDELVSLLV (181 aa)) enclose the Guanylate kinase-like domain. Residue 24-31 (GPSAVGKS) participates in ATP binding.

The protein belongs to the guanylate kinase family.

The protein resides in the cytoplasm. The catalysed reaction is GMP + ATP = GDP + ADP. In terms of biological role, essential for recycling GMP and indirectly, cGMP. This Rhodococcus jostii (strain RHA1) protein is Guanylate kinase.